A 251-amino-acid chain; its full sequence is MPIRNIAIGRPDEATRPDALKAALAEFISTLIFVVAGSGSGMAFNKLTENGATTPSGLVAAAVAHAFGLFVAVSVGANISGGHVNPAVTFGAFIGGNITLLRGILYWIAQLLGSVVACLILKFATGGLAVPAFGLSAGVGVLNAFVFEIVMTFGLVYTVYATAIDPKNGSLGTIAPIAIGFIVGANILAGGAFSGASMNPAVAFGPAVVSWTWTNHWVYWAGPLVGGGIAGLIYEVFFINTTHEQLPTTDY.

Methionine 1 bears the N-acetylmethionine mark. Residues 1 to 23 (MPIRNIAIGRPDEATRPDALKAA) are Cytoplasmic-facing. The chain crosses the membrane as a helical span at residues 24–44 (LAEFISTLIFVVAGSGSGMAF). At 45 to 56 (NKLTENGATTPS) the chain is on the vacuolar side. Residues 57–77 (GLVAAAVAHAFGLFVAVSVGA) traverse the membrane as a helical segment. The Cytoplasmic segment spans residues 78-103 (NISGGHVNPAVTFGAFIGGNITLLRG). The short motif at 85–87 (NPA) is the NPA 1 element. Residues 104-124 (ILYWIAQLLGSVVACLILKFA) traverse the membrane as a helical segment. Residues 125–143 (TGGLAVPAFGLSAGVGVLN) are Vacuolar-facing. Residues 144–164 (AFVFEIVMTFGLVYTVYATAI) traverse the membrane as a helical segment. Residues 165–172 (DPKNGSLG) are Cytoplasmic-facing. The helical transmembrane segment at 173–193 (TIAPIAIGFIVGANILAGGAF) threads the bilayer. Topologically, residues 194–218 (SGASMNPAVAFGPAVVSWTWTNHWV) are vacuolar. The short motif at 199-201 (NPA) is the NPA 2 element. Residues 219–239 (YWAGPLVGGGIAGLIYEVFFI) traverse the membrane as a helical segment. The Cytoplasmic portion of the chain corresponds to 240 to 251 (NTTHEQLPTTDY).

The protein belongs to the MIP/aquaporin (TC 1.A.8) family. TIP (TC 1.A.8.10) subfamily. As to quaternary structure, interacts with cucumber mosaic virus (CMV) Protein 1a. In terms of tissue distribution, in all the vegetative organs, but not in seeds. Preferentially expressed in roots.

The protein resides in the vacuole membrane. Functionally, water channel required to facilitate the transport of water, diffusion of amino acids and/or peptides from the vacuolar compartment to the cytoplasm. Does not promote glycerol permeability. May play a role in the control of cell turgor and cell expansion. Its function is impaired by Hg(2+). May be involved in a vesicle-based metabolite routing through or between pre-vacuolar compartments and the central vacuole. Transports urea in yeast cells in a pH-independent manner. Transports H(2)O(2) in yeast cells. The protein is Aquaporin TIP1-1 (TIP1-1) of Arabidopsis thaliana (Mouse-ear cress).